The sequence spans 101 residues: Thylakoid-associated protein slr0729 (101 aa).

Its subcellular location is the cellular thylakoid membrane. The protein is Thylakoid-associated protein slr0729 of Synechocystis sp. (strain ATCC 27184 / PCC 6803 / Kazusa).